We begin with the raw amino-acid sequence, 311 residues long: Small ribosomal subunit biogenesis GTPase RsgA (311 aa).

One can recognise a CP-type G domain in the interval 77 to 239 (LSKQSHIIAT…IIDTPGIKGF (163 aa)). Residues 126 to 129 (NKTD) and 180 to 188 (GHSGVGKST) contribute to the GTP site. 4 residues coordinate Zn(2+): C263, C268, H270, and C276.

It belongs to the TRAFAC class YlqF/YawG GTPase family. RsgA subfamily. In terms of assembly, monomer. Associates with 30S ribosomal subunit, binds 16S rRNA. Zn(2+) is required as a cofactor.

It localises to the cytoplasm. Its function is as follows. One of several proteins that assist in the late maturation steps of the functional core of the 30S ribosomal subunit. Helps release RbfA from mature subunits. May play a role in the assembly of ribosomal proteins into the subunit. Circularly permuted GTPase that catalyzes slow GTP hydrolysis, GTPase activity is stimulated by the 30S ribosomal subunit. This Azobacteroides pseudotrichonymphae genomovar. CFP2 protein is Small ribosomal subunit biogenesis GTPase RsgA.